A 202-amino-acid polypeptide reads, in one-letter code: Nucleoid occlusion factor SlmA (202 aa).

Residues 14–75 (KERQQQVLEV…ALIERIEQTL (62 aa)) form the HTH tetR-type domain. The H-T-H motif DNA-binding region spans 38–57 (TTERLAKAVGVSEGALYRYF).

The protein belongs to the nucleoid occlusion factor SlmA family. Homodimer. Interacts with FtsZ.

The protein localises to the cytoplasm. It localises to the nucleoid. Functionally, required for nucleoid occlusion (NO) phenomenon, which prevents Z-ring formation and cell division over the nucleoid. Acts as a DNA-associated cell division inhibitor that binds simultaneously chromosomal DNA and FtsZ, and disrupts the assembly of FtsZ polymers. SlmA-DNA-binding sequences (SBS) are dispersed on non-Ter regions of the chromosome, preventing FtsZ polymerization at these regions. The protein is Nucleoid occlusion factor SlmA of Haemophilus ducreyi (strain 35000HP / ATCC 700724).